A 974-amino-acid chain; its full sequence is Mediator of RNA polymerase II transcription subunit 16 (974 aa).

Residues 62–92 (ESSSTLSTHSTTTSVNGSTTAGVGSTPNFGG) are disordered. A compositionally biased stretch (low complexity) spans 63 to 75 (SSSTLSTHSTTTS). Residues 76 to 92 (VNGSTTAGVGSTPNFGG) show a composition bias toward polar residues. The Nuclear localization signal motif lies at 889–893 (KLPIK).

This sequence belongs to the Mediator complex subunit 16 family. In terms of assembly, component of the Mediator complex, which is composed of at least 21 subunits that form three structurally distinct submodules. The Mediator head module contains MED6, MED8, MED11, SRB4/MED17, SRB5/MED18, ROX3/MED19, SRB2/MED20 and SRB6/MED22, the middle module contains MED1, MED4, NUT1/MED5, MED7, CSE2/MED9, NUT2/MED10, SRB7/MED21 and SOH1/MED31, and the tail module contains MED2, PGD1/MED3, RGR1/MED14, GAL11/MED15 and SIN4/MED16. The head and the middle modules interact directly with RNA polymerase II, whereas the elongated tail module interacts with gene-specific regulatory proteins. Interacts with HOG1. Phosphorylated by KIN28.

It localises to the nucleus. In terms of biological role, component of the Mediator complex, a coactivator involved in the regulated transcription of nearly all RNA polymerase II-dependent genes. Mediator functions as a bridge to convey information from gene-specific regulatory proteins to the basal RNA polymerase II transcription machinery. The Mediator complex, having a compact conformation in its free form, is recruited to promoters by direct interactions with regulatory proteins and serves for the assembly of a functional preinitiation complex with RNA polymerase II and the general transcription factors. The Mediator complex unfolds to an extended conformation and partially surrounds RNA polymerase II, specifically interacting with the unphosphorylated form of the C-terminal domain (CTD) of RNA polymerase II. The Mediator complex dissociates from the RNA polymerase II holoenzyme and stays at the promoter when transcriptional elongation begins. The polypeptide is Mediator of RNA polymerase II transcription subunit 16 (SIN4) (Saccharomyces cerevisiae (strain ATCC 204508 / S288c) (Baker's yeast)).